The primary structure comprises 264 residues: Stage 0 sporulation protein A (264 aa).

The 119-residue stretch at 5-123 folds into the Response regulatory domain; the sequence is KVCLVDDNKE…NLTSHIRQVS (119 aa). Residues Asp10, Asp11, and Asp56 each coordinate Ca(2+). Residue Asp56 is modified to 4-aspartylphosphate. The H-T-H motif DNA-binding region spans 196 to 215; that stretch reads PDIAKKYNTTASRVERAIRH.

Requires Ca(2+) as cofactor. Post-translationally, phosphorylated by KinA and KinB.

The protein localises to the cytoplasm. In terms of biological role, may play the central regulatory role in sporulation. It may be an element of the effector pathway responsible for the activation of sporulation genes in response to nutritional stress. Spo0A may act in concert with Spo0H (a sigma factor) to control the expression of some genes that are critical to the sporulation process. Repressor of abrB, activator of the spoIIa operon. Binds the DNA sequence 5'-TGNCGAA-3' (0A box). This chain is Stage 0 sporulation protein A (spo0A), found in Bacillus anthracis.